A 330-amino-acid polypeptide reads, in one-letter code: Probable L-asparaginase (330 aa).

Residues Pro-6–Tyr-330 enclose the Asparaginase/glutaminase domain. Thr-16 functions as the O-isoaspartyl threonine intermediate in the catalytic mechanism. Residues Ser-62 and Thr-95–Asp-96 each bind substrate.

It belongs to the asparaginase 1 family.

It is found in the cytoplasm. It catalyses the reaction L-asparagine + H2O = L-aspartate + NH4(+). The protein is Probable L-asparaginase (ansA) of Helicobacter pylori (strain ATCC 700392 / 26695) (Campylobacter pylori).